Reading from the N-terminus, the 327-residue chain is Malate dehydrogenase 1 (327 aa).

12-18 contributes to the NAD(+) binding site; sequence GAAGQIA. Positions 93 and 99 each coordinate substrate. Residues N106, Q113, and 130–132 each bind NAD(+); that span reads VGN. Substrate contacts are provided by N132 and R163. H188 acts as the Proton acceptor in catalysis.

Belongs to the LDH/MDH superfamily. MDH type 2 family.

It catalyses the reaction (S)-malate + NAD(+) = oxaloacetate + NADH + H(+). Catalyzes the reversible oxidation of malate to oxaloacetate. The polypeptide is Malate dehydrogenase 1 (Burkholderia thailandensis (strain ATCC 700388 / DSM 13276 / CCUG 48851 / CIP 106301 / E264)).